We begin with the raw amino-acid sequence, 356 residues long: UDP-N-acetylglucosamine--N-acetylmuramyl-(pentapeptide) pyrophosphoryl-undecaprenol N-acetylglucosamine transferase (356 aa).

UDP-N-acetyl-alpha-D-glucosamine is bound by residues 12–14 (TGG), asparagine 124, arginine 163, serine 188, isoleucine 242, 261–266 (ALTVSE), and glutamine 287.

It belongs to the glycosyltransferase 28 family. MurG subfamily.

It is found in the cell inner membrane. The enzyme catalyses di-trans,octa-cis-undecaprenyl diphospho-N-acetyl-alpha-D-muramoyl-L-alanyl-D-glutamyl-meso-2,6-diaminopimeloyl-D-alanyl-D-alanine + UDP-N-acetyl-alpha-D-glucosamine = di-trans,octa-cis-undecaprenyl diphospho-[N-acetyl-alpha-D-glucosaminyl-(1-&gt;4)]-N-acetyl-alpha-D-muramoyl-L-alanyl-D-glutamyl-meso-2,6-diaminopimeloyl-D-alanyl-D-alanine + UDP + H(+). The protein operates within cell wall biogenesis; peptidoglycan biosynthesis. Its function is as follows. Cell wall formation. Catalyzes the transfer of a GlcNAc subunit on undecaprenyl-pyrophosphoryl-MurNAc-pentapeptide (lipid intermediate I) to form undecaprenyl-pyrophosphoryl-MurNAc-(pentapeptide)GlcNAc (lipid intermediate II). In Pseudomonas fluorescens (strain ATCC BAA-477 / NRRL B-23932 / Pf-5), this protein is UDP-N-acetylglucosamine--N-acetylmuramyl-(pentapeptide) pyrophosphoryl-undecaprenol N-acetylglucosamine transferase.